Here is a 331-residue protein sequence, read N- to C-terminus: MAQLFYDTDADLSLLSGKTVAIVGYGSQGHAHALNLKDSGVDVVVGLYEGSRSAEKAKADGLEVLSVAEAAERADWIMVLLPDEFQKDVYAKEIAPHLKAGKVLSFAHGFNIRFGLIKPPADVDVVMIAPKGPGHTVRWEYQNGQGVPALFAIEQDASGNARGLAMAYAKGIGGTRAGILETNFKEETETDLFGEQAVLCGGLSELVKAGFETLVEAGYQPELAYFECLHEVKLIVDLMVKGGLSAMRDSISNTAEYGDYVSGPRLITADTKAEMKRILGDIQDGTFAKNFVAECEAGKPEMNKIREQDRHHKIEEVGKGLRSMFSWLKAS.

Residues 2-182 (AQLFYDTDAD…GGTRAGILET (181 aa)) enclose the KARI N-terminal Rossmann domain. NADP(+) contacts are provided by residues 25–28 (YGSQ), Ser51, Ser53, and 83–86 (DEFQ). His108 is an active-site residue. Gly134 serves as a coordination point for NADP(+). Positions 183 to 328 (NFKEETETDL…KGLRSMFSWL (146 aa)) constitute a KARI C-terminal knotted domain. Residues Asp191, Glu195, Glu227, and Glu231 each contribute to the Mg(2+) site. Ser252 serves as a coordination point for substrate.

This sequence belongs to the ketol-acid reductoisomerase family. Requires Mg(2+) as cofactor.

The enzyme catalyses (2R)-2,3-dihydroxy-3-methylbutanoate + NADP(+) = (2S)-2-acetolactate + NADPH + H(+). It carries out the reaction (2R,3R)-2,3-dihydroxy-3-methylpentanoate + NADP(+) = (S)-2-ethyl-2-hydroxy-3-oxobutanoate + NADPH + H(+). It participates in amino-acid biosynthesis; L-isoleucine biosynthesis; L-isoleucine from 2-oxobutanoate: step 2/4. Its pathway is amino-acid biosynthesis; L-valine biosynthesis; L-valine from pyruvate: step 2/4. Functionally, involved in the biosynthesis of branched-chain amino acids (BCAA). Catalyzes an alkyl-migration followed by a ketol-acid reduction of (S)-2-acetolactate (S2AL) to yield (R)-2,3-dihydroxy-isovalerate. In the isomerase reaction, S2AL is rearranged via a Mg-dependent methyl migration to produce 3-hydroxy-3-methyl-2-ketobutyrate (HMKB). In the reductase reaction, this 2-ketoacid undergoes a metal-dependent reduction by NADPH to yield (R)-2,3-dihydroxy-isovalerate. The protein is Ketol-acid reductoisomerase (NADP(+)) of Synechococcus sp. (strain WH7803).